We begin with the raw amino-acid sequence, 77 residues long: Large ribosomal subunit protein eL14 (77 aa).

It belongs to the eukaryotic ribosomal protein eL14 family.

This chain is Large ribosomal subunit protein eL14, found in Methanococcus maripaludis (strain C6 / ATCC BAA-1332).